The chain runs to 177 residues: MSRIAKYPVELPKGVEASIQQDQITVKGPLGTLVQALTGDVNIVEDAGKLTFAAANDSRHANAMSGTVRALVANMVTGVSKGFERKLTLVGVGYRASVQGEAVKLQLGFSHDILHKLPAGIKAECPTQTEIVIKGANKQVVGQVAAEIRAYREPEPYKGKGVRYADERVVIKETKKK.

The protein belongs to the universal ribosomal protein uL6 family. In terms of assembly, part of the 50S ribosomal subunit.

Its function is as follows. This protein binds to the 23S rRNA, and is important in its secondary structure. It is located near the subunit interface in the base of the L7/L12 stalk, and near the tRNA binding site of the peptidyltransferase center. This chain is Large ribosomal subunit protein uL6, found in Bordetella avium (strain 197N).